The primary structure comprises 667 residues: Protein OS-9 (667 aa).

An N-terminal signal peptide occupies residues 1–25 (MAAETLLSSLLGLLLLGLLLPATLT). The MRH domain occupies 108 to 230 (APCLLKTKDW…TIRTPRLCPH (123 aa)). A disulfide bridge connects residues cysteine 110 and cysteine 123. A mannooligosaccharide derivative is bound by residues tryptophan 117, tryptophan 118, and glutamine 130. N-linked (GlcNAc...) asparagine glycosylation is present at asparagine 177. Cystine bridges form between cysteine 181–cysteine 216 and cysteine 196–cysteine 228. Residues aspartate 182, arginine 188, glutamate 212, and tyrosine 218 each coordinate a mannooligosaccharide derivative. Disordered stretches follow at residues 262-450 (QADS…SDRE), 506-541 (EKQS…EHRV), and 636-667 (ERQR…EFDF). Basic and acidic residues-rich tracts occupy residues 263 to 279 (ADSK…RQDP), 304 to 328 (ENSK…KEET), and 396 to 408 (PSRE…KGDP). The span at 410 to 429 (QQNEVEEEEDDEDEDEDEDE) shows a compositional bias: acidic residues. The segment covering 430-450 (RQLLGEFEKELEGILLPSDRE) has biased composition (basic and acidic residues). Over residues 514–523 (KKHRKRRVVP) the composition is skewed to basic residues. Positions 636 to 647 (ERQRQKELESNY) are enriched in basic and acidic residues.

This sequence belongs to the OS-9 family. As to quaternary structure, component of the HRD1 complex, which comprises at least SYNV1/HRD1, DERL1/2, FAM8A1, HERPUD1/HERP, OS9, SEL1L and UBE2J1. FAM8A1 is stabilized by interaction with SYNV1, which prevents its proteasomal degradation. OS9 and UBE2J1 recruitment to the complex may be mediated by SEL1L. Through this complex, may interact with ERLEC1 and HSPA5. Interacts (via C-terminus) with CPNE6 (via second C2 domain); this interaction occurs in a calcium-dependent manner in vitro. Interacts with CREB3. In terms of processing, intramolecular disulfide bonds.

The protein localises to the endoplasmic reticulum lumen. Functionally, lectin component of the HRD1 complex, which functions in endoplasmic reticulum (ER) quality control and ER-associated degradation (ERAD). Specifically recognizes and binds improperly folded glycoproteins as well as hyperglycosylated proteins, retain them in the ER, and transfers them to the ubiquitination machinery and promote their degradation. Possible targets include TRPV4 as well as hyperglycosylated HSP90B1. The protein is Protein OS-9 (OS9) of Bos taurus (Bovine).